The following is a 230-amino-acid chain: Sugar fermentation stimulation protein homolog (230 aa).

It belongs to the SfsA family.

The sequence is that of Sugar fermentation stimulation protein homolog from Clostridium acetobutylicum (strain ATCC 824 / DSM 792 / JCM 1419 / IAM 19013 / LMG 5710 / NBRC 13948 / NRRL B-527 / VKM B-1787 / 2291 / W).